Consider the following 189-residue polypeptide: Matrix protein (189 aa).

Belongs to the novirhabdovirus matrix protein family. As to quaternary structure, homomultimer. Interacts with nucleoprotein and with the cytoplasmic domain of glycoprotein.

Its subcellular location is the virion membrane. It localises to the host endomembrane system. Its function is as follows. Plays a major role in assembly and budding of virion. Completely covers the ribonucleoprotein coil and keep it in condensed bullet-shaped form. Inhibits viral transcription and stimulates replication. The sequence is that of Matrix protein (M) from Gobiosoma bosc (Naked goby).